Here is a 324-residue protein sequence, read N- to C-terminus: Zinc finger C2HC domain-containing protein 1A (324 aa).

The segment at 15 to 44 (DLLPCKICGRTFFPLALKKHGPICQKTATK) adopts a C2HC/C3H-type 1 zinc-finger fold. The Zn(2+) site is built by Cys-19, Cys-22, His-34, and Cys-38. The tract at residues 43 to 83 (TKKRKTFDSSRQRAEGTDIPTVKPLKPRPEPPKKPSNWRRK) is disordered. The segment covering 48–58 (TFDSSRQRAEG) has biased composition (basic and acidic residues). The segment at 118–147 (DYIQCPYCQRRFNENAADRHINFCKEQAAR) adopts a C2HC/C3H-type 2 zinc-finger fold. Residues Cys-122, Cys-125, His-137, and Cys-141 each coordinate Zn(2+). The interval 149-225 (SNKGKFSTDS…NKPQTLSPSH (77 aa)) is disordered. A compositionally biased stretch (low complexity) spans 176–187 (SNPPGIPSSGSS). Composition is skewed to polar residues over residues 188–198 (RLPQPSTTSKT) and 206–223 (KASSVNSPLGNKPQTLSP). Ser-222 carries the phosphoserine modification. Phosphothreonine is present on Thr-243. Position 291 is a phosphoserine (Ser-291).

It belongs to the ZC2HC1 family. Requires Zn(2+) as cofactor.

This Mus musculus (Mouse) protein is Zinc finger C2HC domain-containing protein 1A (Zc2hc1a).